The chain runs to 241 residues: ATP synthase subunit 4, mitochondrial (241 aa).

A mitochondrion-targeting transit peptide spans 1–35; it reads MASRLARTAVGAARLRPSVVPRVLPALSTVASPRY.

It belongs to the eukaryotic ATPase B chain family. F-type ATPases have 2 components, CF(1) - the catalytic core - and CF(0) - the membrane proton channel. In yeast, the dimeric form of ATP synthase consists of 17 polypeptides: alpha, beta, gamma, delta, epsilon, 4 (B), 5 (OSCP), 6 (A), 8, 9 (C), d, E (Tim11), f, g, h, i/j and k.

The protein localises to the mitochondrion. The protein resides in the mitochondrion inner membrane. In terms of biological role, mitochondrial membrane ATP synthase (F(1)F(0) ATP synthase or Complex V) produces ATP from ADP in the presence of a proton gradient across the membrane which is generated by electron transport complexes of the respiratory chain. F-type ATPases consist of two structural domains, F(1) - containing the extramembraneous catalytic core, and F(0) - containing the membrane proton channel, linked together by a central stalk and a peripheral stalk. During catalysis, ATP synthesis in the catalytic domain of F(1) is coupled via a rotary mechanism of the central stalk subunits to proton translocation. Part of the complex F(0) domain and the peripheric stalk, which acts as a stator to hold the catalytic alpha(3)beta(3) subcomplex and subunit a/atp6 static relative to the rotary elements. The chain is ATP synthase subunit 4, mitochondrial (atp-3) from Neurospora crassa (strain ATCC 24698 / 74-OR23-1A / CBS 708.71 / DSM 1257 / FGSC 987).